The following is a 354-amino-acid chain: Methylthioribose-1-phosphate isomerase (354 aa).

Substrate is bound by residues 58–60, R101, and Q204; that span reads RGA. D245 functions as the Proton donor in the catalytic mechanism. 255 to 256 serves as a coordination point for substrate; it reads NK.

This sequence belongs to the eIF-2B alpha/beta/delta subunits family. MtnA subfamily.

The enzyme catalyses 5-(methylsulfanyl)-alpha-D-ribose 1-phosphate = 5-(methylsulfanyl)-D-ribulose 1-phosphate. Its pathway is amino-acid biosynthesis; L-methionine biosynthesis via salvage pathway; L-methionine from S-methyl-5-thio-alpha-D-ribose 1-phosphate: step 1/6. Catalyzes the interconversion of methylthioribose-1-phosphate (MTR-1-P) into methylthioribulose-1-phosphate (MTRu-1-P). This chain is Methylthioribose-1-phosphate isomerase, found in Xanthomonas axonopodis pv. citri (strain 306).